Here is a 46-residue protein sequence, read N- to C-terminus: Large ribosomal subunit protein bL36 (46 aa).

It belongs to the bacterial ribosomal protein bL36 family.

The chain is Large ribosomal subunit protein bL36 from Salmonella agona (strain SL483).